The following is a 136-amino-acid chain: Histone H3, embryonic (136 aa).

The segment at methionine 1–arginine 43 is disordered. Position 5 is an N6-methylated lysine (lysine 5). Lysine 10 carries the N6-acetyllysine; alternate modification. Lysine 10 carries the post-translational modification N6-methylated lysine; alternate. Position 11 is a phosphoserine (serine 11). Residues lysine 15 and lysine 24 each carry the N6-acetyllysine modification. N6-methylated lysine occurs at positions 28, 37, and 80.

The protein belongs to the histone H3 family. The nucleosome is a histone octamer containing two molecules each of H2A, H2B, H3 and H4 assembled in one H3-H4 heterotetramer and two H2A-H2B heterodimers. The octamer wraps approximately 147 bp of DNA. Post-translationally, acetylation is generally linked to gene activation. In terms of processing, methylation at Lys-5 is linked to gene activation. Methylation at Lys-10 is linked to gene repression.

It is found in the nucleus. Its subcellular location is the chromosome. In terms of biological role, core component of nucleosome. Nucleosomes wrap and compact DNA into chromatin, limiting DNA accessibility to the cellular machineries which require DNA as a template. Histones thereby play a central role in transcription regulation, DNA repair, DNA replication and chromosomal stability. DNA accessibility is regulated via a complex set of post-translational modifications of histones, also called histone code, and nucleosome remodeling. This is Histone H3, embryonic from Strongylocentrotus purpuratus (Purple sea urchin).